Here is a 964-residue protein sequence, read N- to C-terminus: Translation initiation factor IF-2 (964 aa).

Positions 35-353 are disordered; the sequence is ASSTIEPPVV…RQKRNEYESM (319 aa). Low complexity predominate over residues 64 to 108; it reads KPTPAKPAAKPGAPAPKPGTAQKPTAPTPGAVAAPKPGTAAAKPT. Residues 124-133 show a composition bias toward pro residues; it reads PAKPTAPKPA. The segment covering 145–155 has biased composition (basic and acidic residues); it reads AAKKAAEDKAT. The segment covering 166-178 has biased composition (pro residues); sequence NAMPRPMAKPGPK. A compositionally biased stretch (low complexity) spans 220 to 233; it reads PRPQGGQRSGAPRD. Composition is skewed to gly residues over residues 234-252 and 290-333; these read GQGG…GPRP and GKGG…GRPG. The segment covering 337–346 has biased composition (basic residues); sequence RRGRKSKRQK. Residues 459–631 enclose the tr-type G domain; it reads KRPPVVTVMG…VCLTADAELD (173 aa). Positions 468 to 475 are G1; it reads GHVDHGKT. 468–475 is a binding site for GTP; that stretch reads GHVDHGKT. The G2 stretch occupies residues 493–497; the sequence is GITQG. Positions 518–521 are G3; that stretch reads DTPG. GTP-binding positions include 518–522 and 572–575; these read DTPGH and NKID. The interval 572 to 575 is G4; the sequence is NKID. The G5 stretch occupies residues 608 to 610; it reads SAK.

The protein belongs to the TRAFAC class translation factor GTPase superfamily. Classic translation factor GTPase family. IF-2 subfamily.

It is found in the cytoplasm. Its function is as follows. One of the essential components for the initiation of protein synthesis. Protects formylmethionyl-tRNA from spontaneous hydrolysis and promotes its binding to the 30S ribosomal subunits. Also involved in the hydrolysis of GTP during the formation of the 70S ribosomal complex. The chain is Translation initiation factor IF-2 from Corynebacterium efficiens (strain DSM 44549 / YS-314 / AJ 12310 / JCM 11189 / NBRC 100395).